Here is a 290-residue protein sequence, read N- to C-terminus: Light-independent protochlorophyllide reductase iron-sulfur ATP-binding protein (290 aa).

Residues Gly10 to Thr15 and Lys39 each bind ATP. Ser14 is a binding site for Mg(2+). Residues Cys95 and Cys129 each coordinate [4Fe-4S] cluster. Asn180–Arg181 contacts ATP.

Belongs to the NifH/BchL/ChlL family. In terms of assembly, homodimer. Protochlorophyllide reductase is composed of three subunits; ChlL, ChlN and ChlB. Requires [4Fe-4S] cluster as cofactor.

It localises to the plastid. Its subcellular location is the chloroplast. The enzyme catalyses chlorophyllide a + oxidized 2[4Fe-4S]-[ferredoxin] + 2 ADP + 2 phosphate = protochlorophyllide a + reduced 2[4Fe-4S]-[ferredoxin] + 2 ATP + 2 H2O. The protein operates within porphyrin-containing compound metabolism; chlorophyll biosynthesis (light-independent). Component of the dark-operative protochlorophyllide reductase (DPOR) that uses Mg-ATP and reduced ferredoxin to reduce ring D of protochlorophyllide (Pchlide) to form chlorophyllide a (Chlide). This reaction is light-independent. The L component serves as a unique electron donor to the NB-component of the complex, and binds Mg-ATP. In Zygnema circumcarinatum (Green alga), this protein is Light-independent protochlorophyllide reductase iron-sulfur ATP-binding protein.